The sequence spans 34 residues: Turripeptide Pal9a (34 aa).

3 disulfide bridges follow: Cys-3–Cys-17, Cys-8–Cys-19, and Cys-13–Cys-30. Gln-34 is modified (glutamine amide).

Expressed by the venom duct.

It is found in the secreted. The polypeptide is Turripeptide Pal9a (Polystira albida (White giant-turris)).